We begin with the raw amino-acid sequence, 249 residues long: Pleckstrin homology domain-containing family F member 2 (249 aa).

The region spanning 35 to 131 (VLIGEGVLTK…WMNHINKCVS (97 aa)) is the PH domain. Residues 152–212 (DSEATVCMRC…ICDSCYDLLS (61 aa)) form an FYVE-type zinc finger. 8 residues coordinate Zn(2+): cysteine 158, cysteine 161, cysteine 175, cysteine 178, cysteine 183, cysteine 186, cysteine 204, and cysteine 207. A compositionally biased stretch (polar residues) spans 219–232 (CQSTRSDSYSQSPK). The interval 219–249 (CQSTRSDSYSQSPKSSLNDASDDDDDEDSSD) is disordered. The span at 238–249 (ASDDDDDEDSSD) shows a compositional bias: acidic residues.

The protein resides in the early endosome membrane. The protein localises to the endoplasmic reticulum. Functionally, may play a role in early endosome fusion upstream of RAB5, hence regulating receptor trafficking and fluid-phase transport. Enhances cellular sensitivity to TNF-induced apoptosis. The chain is Pleckstrin homology domain-containing family F member 2 (PLEKHF2) from Gallus gallus (Chicken).